The chain runs to 499 residues: Ammonium transporter MEP2 (499 aa).

The Extracellular portion of the chain corresponds to Met1–Asn31. A glycan (N-linked (GlcNAc...) asparagine) is linked at Asn4. Residues Met32–Leu52 traverse the membrane as a helical segment. The Cytoplasmic portion of the chain corresponds to Tyr53–Ala62. A helical transmembrane segment spans residues Leu63–Trp83. Residues Gly84–Asp122 lie on the Extracellular side of the membrane. A helical membrane pass occupies residues Ile123 to Gly143. Topologically, residues Ala144–Pro152 are cytoplasmic. The helical transmembrane segment at Met153–Trp173 threads the bilayer. At Asn174–Tyr187 the chain is on the extracellular side. A helical transmembrane segment spans residues Ala188 to Leu208. Topologically, residues Gly209–Ser230 are cytoplasmic. Residues Val231–Gly251 form a helical membrane-spanning segment. The Extracellular segment spans residues Asn252 to Ala257. The chain crosses the membrane as a helical span at residues Trp258 to Ile278. At Asp279–Thr289 the chain is on the cytoplasmic side. Residues Val290 to Ile312 form a helical membrane-spanning segment. The Extracellular portion of the chain corresponds to Trp313–Ala315. Residues Val316–Ile338 traverse the membrane as a helical segment. Residues Asp339–Ser346 are Cytoplasmic-facing. A helical membrane pass occupies residues Ile347–Val367. The Extracellular segment spans residues Asn368–Gln393. Residues Leu394 to Thr414 traverse the membrane as a helical segment. Residues Met415–Val499 lie on the Cytoplasmic side of the membrane. The segment at Asp428 to Glu441 is enhancer domain. A linker domain region spans residues Phe442–Ala449. Residues Tyr450–Thr485 are autoinhibitory domain. The tract at residues Ile455–Val499 is disordered. Position 457 is a phosphoserine (Ser457). The span at Glu468–Lys482 shows a compositional bias: basic and acidic residues. Over residues Asn483–Lys493 the composition is skewed to polar residues.

The protein belongs to the ammonia transporter channel (TC 1.A.11.2) family. Phosphorylated at Ser-457 by the TORC1 effector kinase NPR1 under nitrogen-limiting conditions which causes a conformational change in the C-terminal region (CTR) to form an open active conformation. Supplementation of nitrogen source leads to inactivation and instant Ser-457 dephosphorylation via plasma membrane PSR1 and PSR2 redundant phosphatases. In terms of processing, the residue Asn-4 of the protein's N-terminal tail is the only site that is glycosylated.

It is found in the cell membrane. In terms of biological role, transporter for ammonium (both charged and uncharged NH3 and NH4) to use as a nitrogen source. The affinity of MEP2 is about twenty times higher than that of MEP1. MEP3 has the lowest affinity. Under ammonium limitation acts as an ammonium sensor, generating a signal that leads to pseudohyphal (filamentous) growth. This Saccharomyces cerevisiae (strain ATCC 204508 / S288c) (Baker's yeast) protein is Ammonium transporter MEP2.